A 326-amino-acid polypeptide reads, in one-letter code: Putative UPF0725 protein At1g28500 (326 aa).

Over residues 301–320 the composition is skewed to basic and acidic residues; it reads KDTEQRSKTRQSEEKVESSQ. The segment at 301–326 is disordered; that stretch reads KDTEQRSKTRQSEEKVESSQKRSRLC.

The protein belongs to the UPF0725 (EMB2204) family.

The chain is Putative UPF0725 protein At1g28500 from Arabidopsis thaliana (Mouse-ear cress).